A 409-amino-acid polypeptide reads, in one-letter code: Argininosuccinate synthase (409 aa).

ATP contacts are provided by residues 13-21 and Ala-40; that span reads AYSGGLDTS. Positions 91 and 96 each coordinate L-citrulline. Gly-121 provides a ligand contact to ATP. 3 residues coordinate L-aspartate: Thr-123, Asn-127, and Asp-128. Asn-127 is a binding site for L-citrulline. Arg-131, Ser-183, Ser-192, Glu-268, and Tyr-280 together coordinate L-citrulline.

Belongs to the argininosuccinate synthase family. Type 1 subfamily. In terms of assembly, homotetramer.

It localises to the cytoplasm. The catalysed reaction is L-citrulline + L-aspartate + ATP = 2-(N(omega)-L-arginino)succinate + AMP + diphosphate + H(+). It participates in amino-acid biosynthesis; L-arginine biosynthesis; L-arginine from L-ornithine and carbamoyl phosphate: step 2/3. The protein is Argininosuccinate synthase of Saccharophagus degradans (strain 2-40 / ATCC 43961 / DSM 17024).